Reading from the N-terminus, the 343-residue chain is Glucan endo-1,3-beta-glucosidase, acidic isoform GI9 (343 aa).

An N-terminal signal peptide occupies residues 1 to 29; the sequence is MTLCIKNGFLAAALVLVGLLICSIQMIGA. Position 30 is a pyrrolidone carboxylic acid (glutamine 30). The active-site Proton donor is glutamate 124. Glutamate 264 functions as the Nucleophile in the catalytic mechanism.

The protein belongs to the glycosyl hydrolase 17 family.

It is found in the secreted. It localises to the extracellular space. The catalysed reaction is Hydrolysis of (1-&gt;3)-beta-D-glucosidic linkages in (1-&gt;3)-beta-D-glucans.. Functionally, implicated in the defense of plants against pathogens. In Nicotiana tabacum (Common tobacco), this protein is Glucan endo-1,3-beta-glucosidase, acidic isoform GI9 (PR2).